We begin with the raw amino-acid sequence, 55 residues long: MAKRSGSGLQSSAGLMRYYEADKNAVHIQPKTVLIVGALAGIAVLFLSAVNGFWP.

Residues 1–29 (MAKRSGSGLQSSAGLMRYYEADKNAVHIQ) lie on the Cytoplasmic side of the membrane. The helical transmembrane segment at 30–49 (PKTVLIVGALAGIAVLFLSA) threads the bilayer. The Extracellular segment spans residues 50 to 55 (VNGFWP).

The protein belongs to the SEC61-beta family. As to quaternary structure, component of the protein translocase complex. Heterotrimer consisting of alpha (SecY), beta (SecG) and gamma (SecE) subunits. Can form oligomers of the heterotrimer.

It localises to the cell membrane. Involved in protein export. The function of the beta subunit is unknown, but it may be involved in stabilization of the trimeric complex. The chain is Preprotein translocase subunit SecG (secG) from Methanosarcina acetivorans (strain ATCC 35395 / DSM 2834 / JCM 12185 / C2A).